Here is a 550-residue protein sequence, read N- to C-terminus: Phospholipase B-like 1 (550 aa).

The first 39 residues, 1–39, serve as a signal peptide directing secretion; sequence MCHRSHGRSLRPPSPLLLLLPLLLQSPWAAGAAEKHNSA. N-linked (GlcNAc...) (high mannose) asparagine; alternate glycosylation is present at Asn-72. The N-linked (GlcNAc...) (hybrid) asparagine; alternate glycan is linked to Asn-72. The propeptide at 210–228 is removed in mature form; the sequence is LSPTKSSSLKKFKIWEMGH. Asn-309 and Asn-412 each carry an N-linked (GlcNAc...) (high mannose) asparagine; alternate glycan. Asn-309 and Asn-412 each carry an N-linked (GlcNAc...) (hybrid) asparagine; alternate glycan. 2 disulfide bridges follow: Cys-471–Cys-476 and Cys-475–Cys-490. Asn-527 is a glycosylation site (N-linked (GlcNAc...) (high mannose) asparagine; alternate). An N-linked (GlcNAc...) (hybrid) asparagine; alternate glycan is attached at Asn-527.

This sequence belongs to the phospholipase B-like family. In terms of assembly, may form a homodimer, each monomer is composed of a chain A and a chain B. Post-translationally, the maturation cleavages that produces chains A and B are required to open the putative substrate binding pocket. Both chains A and B remain associated in the mature protein.

The protein resides in the lysosome. In terms of biological role, exhibits weak phospholipase activity, acting on various phospholipids, including phosphatidylcholine, phosphatidylinositol, phosphatidylethanolamine and lysophospholipids. However, in view of the small size of the putative binding pocket, it has been proposed that it may act rather as an amidase or a peptidase. The protein is Phospholipase B-like 1 (Plbd1) of Rattus norvegicus (Rat).